The chain runs to 224 residues: Dickkopf-related protein 4 (224 aa).

An N-terminal signal peptide occupies residues Met-1–Ala-18. The interval Cys-41–Cys-90 is DKK-type Cys-1. Positions Gly-109 to Gly-139 are disordered. Over residues Lys-126–Gly-136 the composition is skewed to basic residues. Intrachain disulfides connect Cys-145–Cys-157, Cys-151–Cys-166, Cys-156–Cys-194, Cys-176–Cys-202, and Cys-196–Cys-218. The interval Cys-145–Cys-218 is DKK-type Cys-2.

This sequence belongs to the dickkopf family. In terms of assembly, interacts with LRP5 and LRP6. Post-translationally, appears to be not glycosylated. Can be proteolytically processed by a furin-like protease. As to expression, expressed in cerebellum, T-cells, esophagus and lung.

It localises to the secreted. In terms of biological role, antagonizes canonical Wnt signaling by inhibiting LRP5/6 interaction with Wnt and by forming a ternary complex with the transmembrane protein KREMEN that promotes internalization of LRP5/6. DKKs play an important role in vertebrate development, where they locally inhibit Wnt regulated processes such as antero-posterior axial patterning, limb development, somitogenesis and eye formation. In the adult, Dkks are implicated in bone formation and bone disease, cancer and Alzheimer disease. The chain is Dickkopf-related protein 4 (DKK4) from Homo sapiens (Human).